Reading from the N-terminus, the 505-residue chain is Chromosomal replication initiator protein DnaA (505 aa).

The domain I, interacts with DnaA modulators stretch occupies residues 1–90; sequence MSVELWQQCV…RRSSAPRAAP (90 aa). The interval 91–168 is domain II; it reads NAPVSAAVAA…QVEGALKHTS (78 aa). The domain III, AAA+ region stretch occupies residues 169–385; that stretch reads YLNRTFTFDT…GALKRVIAHS (217 aa). Residues Gly-213, Gly-215, Lys-216, and Thr-217 each contribute to the ATP site. Residues 386–505 are domain IV, binds dsDNA; the sequence is HFMGRDITIE…YKNLLRTLTT (120 aa).

It belongs to the DnaA family. Oligomerizes as a right-handed, spiral filament on DNA at oriC.

Its subcellular location is the cytoplasm. Its function is as follows. Plays an essential role in the initiation and regulation of chromosomal replication. ATP-DnaA binds to the origin of replication (oriC) to initiate formation of the DNA replication initiation complex once per cell cycle. Binds the DnaA box (a 9 base pair repeat at the origin) and separates the double-stranded (ds)DNA. Forms a right-handed helical filament on oriC DNA; dsDNA binds to the exterior of the filament while single-stranded (ss)DNA is stabiized in the filament's interior. The ATP-DnaA-oriC complex binds and stabilizes one strand of the AT-rich DNA unwinding element (DUE), permitting loading of DNA polymerase. After initiation quickly degrades to an ADP-DnaA complex that is not apt for DNA replication. Binds acidic phospholipids. In Pseudomonas putida (strain ATCC 700007 / DSM 6899 / JCM 31910 / BCRC 17059 / LMG 24140 / F1), this protein is Chromosomal replication initiator protein DnaA.